Here is a 457-residue protein sequence, read N- to C-terminus: Argininosuccinate lyase (457 aa).

Belongs to the lyase 1 family. Argininosuccinate lyase subfamily.

It is found in the cytoplasm. The catalysed reaction is 2-(N(omega)-L-arginino)succinate = fumarate + L-arginine. It functions in the pathway amino-acid biosynthesis; L-arginine biosynthesis; L-arginine from L-ornithine and carbamoyl phosphate: step 3/3. The protein is Argininosuccinate lyase of Pectobacterium carotovorum subsp. carotovorum (strain PC1).